Consider the following 642-residue polypeptide: Zinc finger protein 14 (642 aa).

The region spanning 4-76 (VSFEDVAVNF…MVERLCESRK (73 aa)) is the KRAB domain. The segment at 77 to 99 (GSKCGETTSQMPNVNINKETSTG) is disordered. Over residues 81–99 (GETTSQMPNVNINKETSTG) the composition is skewed to polar residues. The segment at 103–125 (HECSFCGKDFMHHSSLNRHMRSH) adopts a C2H2-type 1 zinc-finger fold. The segment at 141 to 163 (CKRKAVGKTFSYRHCVRKHERTH) adopts a C2H2-type 2; degenerate zinc-finger fold. The C2H2-type 3 zinc finger occupies 169–191 (YECKQCGKAFIYYQPFQRHERIH). A C2H2-type 4; atypical zinc finger spans residues 197–217 (YECKQCGKTFIYYQSFQKHAH). C2H2-type zinc fingers lie at residues 223-245 (YECK…ERTH), 251-273 (YECK…ERTH), 279-301 (YKCK…KRTH), 307-329 (YECK…VITH), 335-357 (YKCK…ERTH), 363-385 (YECK…ERTH), 391-413 (YECK…ETTH), 419-441 (YECK…ERTH), 447-469 (YECK…ERSH), 475-497 (YECK…ERTH), 503-525 (YECK…EKIH), 531-553 (FECK…ERTH), 559-581 (YQCK…ERTH), 587-609 (YRCK…ERSH), and 615-637 (YECK…ERTH).

It belongs to the krueppel C2H2-type zinc-finger protein family.

It is found in the nucleus. In terms of biological role, may be involved in transcriptional regulation. This chain is Zinc finger protein 14 (ZNF14), found in Macaca fascicularis (Crab-eating macaque).